A 644-amino-acid chain; its full sequence is Threonine--tRNA ligase (644 aa).

The 61-residue stretch at 1–61 (MVAITLPDGS…AHDAKVEIVT (61 aa)) folds into the TGS domain. Residues 242 to 533 (DHRKIGKALN…LIENYAGWMP (292 aa)) form a catalytic region. Residues Cys-333, His-384, and His-510 each coordinate Zn(2+).

It belongs to the class-II aminoacyl-tRNA synthetase family. As to quaternary structure, homodimer. Zn(2+) is required as a cofactor.

The protein resides in the cytoplasm. The catalysed reaction is tRNA(Thr) + L-threonine + ATP = L-threonyl-tRNA(Thr) + AMP + diphosphate + H(+). Functionally, catalyzes the attachment of threonine to tRNA(Thr) in a two-step reaction: L-threonine is first activated by ATP to form Thr-AMP and then transferred to the acceptor end of tRNA(Thr). Also edits incorrectly charged L-seryl-tRNA(Thr). The sequence is that of Threonine--tRNA ligase from Psychrobacter cryohalolentis (strain ATCC BAA-1226 / DSM 17306 / VKM B-2378 / K5).